Consider the following 389-residue polypeptide: Probable nitrate transporter NarT (389 aa).

Transmembrane regions (helical) follow at residues 14–34 (TLSL…MPFI), 45–65 (ISII…PFGY), 69–89 (IVGA…PIFF), 97–117 (GMLM…SVGV), 139–159 (GNIG…IIGW), 161–181 (TTVR…FIFG), 211–231 (WYFI…NYLV), 246–266 (GVFI…GDKF), 268–288 (AVKV…ILGI), 294–314 (LFTV…GLIF), 331–351 (IVSM…TYVA), and 353–373 (LTGS…IALF).

It belongs to the major facilitator superfamily. Nitrate/nitrite porter (TC 2.A.1.8) family.

It is found in the cell membrane. In terms of biological role, probably required for nitrate uptake under anoxic conditions. Also possibly involved in excretion of nitrite produced by the dissimilatory reduction of nitrate. This is Probable nitrate transporter NarT (narT) from Staphylococcus aureus (strain USA300).